A 333-amino-acid chain; its full sequence is Glycerol-3-phosphate dehydrogenase [NAD(P)+] (333 aa).

NADPH-binding residues include Ser-10, Trp-11, His-31, Arg-32, and Lys-105. Positions 105, 136, and 138 each coordinate sn-glycerol 3-phosphate. Ala-140 contributes to the NADPH binding site. 5 residues coordinate sn-glycerol 3-phosphate: Lys-191, Asp-244, Ser-254, Arg-255, and Asn-256. The active-site Proton acceptor is Lys-191. Position 255 (Arg-255) interacts with NADPH. NADPH-binding residues include Ile-279 and Glu-281.

It belongs to the NAD-dependent glycerol-3-phosphate dehydrogenase family.

It localises to the cytoplasm. The catalysed reaction is sn-glycerol 3-phosphate + NAD(+) = dihydroxyacetone phosphate + NADH + H(+). It carries out the reaction sn-glycerol 3-phosphate + NADP(+) = dihydroxyacetone phosphate + NADPH + H(+). It functions in the pathway membrane lipid metabolism; glycerophospholipid metabolism. Catalyzes the reduction of the glycolytic intermediate dihydroxyacetone phosphate (DHAP) to sn-glycerol 3-phosphate (G3P), the key precursor for phospholipid synthesis. This chain is Glycerol-3-phosphate dehydrogenase [NAD(P)+], found in Chlorobium chlorochromatii (strain CaD3).